The chain runs to 148 residues: Putative nickel-responsive regulator (148 aa).

Ni(2+) contacts are provided by histidine 88, histidine 99, histidine 101, and cysteine 107.

Belongs to the transcriptional regulatory CopG/NikR family. Ni(2+) is required as a cofactor.

In terms of biological role, transcriptional regulator. The protein is Putative nickel-responsive regulator of Helicobacter pylori (strain Shi470).